Consider the following 437-residue polypeptide: UBX domain-containing protein 6 (437 aa).

Disordered regions lie at residues 1-45 (MNSF…AQGG) and 89-109 (ERRQ…QPDR). Residues 7–18 (FLNKKRVQNHFK) show a composition bias toward basic residues. The 73-residue stretch at 179 to 251 (ETAIETICKY…VFTKPSDVHL (73 aa)) folds into the PUB domain. A UBX domain is found at 332-409 (YRYKYTLIRV…SLAPAALLHV (78 aa)).

Interacts with cdc-48.1 (via N-terminus) and cdc-48.2 (via N-terminus). In terms of tissue distribution, expressed in the pharynx and some head neurons.

Probably acts as an adapter for ATPase cdc-48.1 and/or cdc-48.2, conferring substrate specificity. Involved in the lysosomal clearance of cellular material in diet restricted conditions. The sequence is that of UBX domain-containing protein 6 from Caenorhabditis elegans.